A 475-amino-acid polypeptide reads, in one-letter code: Sulfate adenylyltransferase subunit 1 (475 aa).

The 215-residue stretch at Lys25–Arg239 folds into the tr-type G domain. The segment at Gly34–Ser41 is G1. Gly34–Ser41 serves as a coordination point for GTP. A G2 region spans residues Gly92–Asp96. The segment at Asp113–Gly116 is G3. GTP is bound by residues Asp113–His117 and Asn168–Asp171. The interval Asn168–Asp171 is G4. A G5 region spans residues Ser206 to Leu208.

This sequence belongs to the TRAFAC class translation factor GTPase superfamily. Classic translation factor GTPase family. CysN/NodQ subfamily. In terms of assembly, heterodimer composed of CysD, the smaller subunit, and CysN.

The catalysed reaction is sulfate + ATP + H(+) = adenosine 5'-phosphosulfate + diphosphate. It participates in sulfur metabolism; hydrogen sulfide biosynthesis; sulfite from sulfate: step 1/3. In terms of biological role, with CysD forms the ATP sulfurylase (ATPS) that catalyzes the adenylation of sulfate producing adenosine 5'-phosphosulfate (APS) and diphosphate, the first enzymatic step in sulfur assimilation pathway. APS synthesis involves the formation of a high-energy phosphoric-sulfuric acid anhydride bond driven by GTP hydrolysis by CysN coupled to ATP hydrolysis by CysD. This Escherichia coli O17:K52:H18 (strain UMN026 / ExPEC) protein is Sulfate adenylyltransferase subunit 1.